A 100-amino-acid chain; its full sequence is Dromyosuppressin (100 aa).

The first 24 residues, 1–24, serve as a signal peptide directing secretion; sequence MSFAQFFVACCLAIVLLAVSNTRA. Residues 25-84 constitute a propeptide that is removed on maturation; sequence AVQGPPLCQSGIVEEMPPHIRKVCQALENSDQLTSALKSYINNEASALVANSDDLLKNYN. The residue at position 96 (phenylalanine 96) is a Phenylalanine amide.

This sequence belongs to the myosuppressin family.

It is found in the secreted. Its function is as follows. Myoinhibiting neuropeptide. The chain is Dromyosuppressin from Drosophila melanogaster (Fruit fly).